The chain runs to 474 residues: Glutamate--tRNA ligase (474 aa).

Positions 9–19 (PSPTGYLHVGG) match the 'HIGH' region motif. The 'KMSKS' region motif lies at 240–244 (KLSKR). Lys-243 is an ATP binding site.

The protein belongs to the class-I aminoacyl-tRNA synthetase family. Glutamate--tRNA ligase type 1 subfamily. Monomer.

It localises to the cytoplasm. The enzyme catalyses tRNA(Glu) + L-glutamate + ATP = L-glutamyl-tRNA(Glu) + AMP + diphosphate. Functionally, catalyzes the attachment of glutamate to tRNA(Glu) in a two-step reaction: glutamate is first activated by ATP to form Glu-AMP and then transferred to the acceptor end of tRNA(Glu). In Vibrio vulnificus (strain CMCP6), this protein is Glutamate--tRNA ligase.